Consider the following 269-residue polypeptide: MSEGKKRSRGGLAIISPPKRRSQRKSTSDSPIPEPIMKRSITVKKIMPRKTLAAIVNTGSQSTPKVSNVPPAPRRSSRISPKIQKENAFSEQSQIVHKDVPGQSSAPKINVLSPIPVNIQLSPKQDNRDIIMSQKVRRSYSRLEMSLNSSSSLYSPTRKTDSSDTSTPNVVLKSGRSSLFGFDKLLNSEMPDGELKKSNGVTRKKNTKERILGTVLPEQPDHNIPGVVLAKQKRRKRKVAIIEKSDLDEWAAFMNAEFEEAEKFDLTVE.

3 disordered regions span residues 1 to 39 (MSEG…IMKR), 56 to 110 (VNTG…PKIN), and 146 to 169 (SLNS…STPN). Positions 57–66 (NTGSQSTPKV) are enriched in polar residues. Residues 85 to 87 (KEN) carry the KEN box motif. Positions 146-155 (SLNSSSSLYS) are enriched in low complexity. The short motif at 180–182 (FGF) is the FGF motif element. A C-terminal Sororin domain region spans residues 247-269 (LDEWAAFMNAEFEEAEKFDLTVE).

This sequence belongs to the sororin family. Interacts with the APC/C complex. Interacts with the chromatin-bound cohesin complex; the interaction is indirect, occurs after DNA replication and requires acetylation of the cohesin component smc3. Interacts (via the FGF motif) with pds5a and pds5b; the interaction is direct and prevents the interaction of pds5a with wapl. Post-translationally, ubiquitinated by the APC/C complex in G1, leading to its degradation.

Its subcellular location is the nucleus. The protein resides in the chromosome. It is found in the cytoplasm. Regulator of sister chromatid cohesion in mitosis stabilizing cohesin complex association with chromatin. May antagonize the action of wapl which stimulates cohesin dissociation from chromatin. Cohesion ensures that chromosome partitioning is accurate in both meiotic and mitotic cells and plays an important role in DNA repair. Required for efficient DNA double-stranded break repair. The sequence is that of Sororin (cdca5-a) from Xenopus laevis (African clawed frog).